Reading from the N-terminus, the 243-residue chain is Leucyl/phenylalanyl-tRNA--protein transferase (243 aa).

Belongs to the L/F-transferase family.

Its subcellular location is the cytoplasm. It catalyses the reaction N-terminal L-lysyl-[protein] + L-leucyl-tRNA(Leu) = N-terminal L-leucyl-L-lysyl-[protein] + tRNA(Leu) + H(+). The catalysed reaction is N-terminal L-arginyl-[protein] + L-leucyl-tRNA(Leu) = N-terminal L-leucyl-L-arginyl-[protein] + tRNA(Leu) + H(+). It carries out the reaction L-phenylalanyl-tRNA(Phe) + an N-terminal L-alpha-aminoacyl-[protein] = an N-terminal L-phenylalanyl-L-alpha-aminoacyl-[protein] + tRNA(Phe). Functions in the N-end rule pathway of protein degradation where it conjugates Leu, Phe and, less efficiently, Met from aminoacyl-tRNAs to the N-termini of proteins containing an N-terminal arginine or lysine. This Saccharophagus degradans (strain 2-40 / ATCC 43961 / DSM 17024) protein is Leucyl/phenylalanyl-tRNA--protein transferase.